A 129-amino-acid polypeptide reads, in one-letter code: Large ribosomal subunit protein bL17 (129 aa).

It belongs to the bacterial ribosomal protein bL17 family. In terms of assembly, part of the 50S ribosomal subunit. Contacts protein L32.

This chain is Large ribosomal subunit protein bL17, found in Pseudomonas aeruginosa (strain UCBPP-PA14).